The chain runs to 331 residues: Anthranilate phosphoribosyltransferase (331 aa).

5-phospho-alpha-D-ribose 1-diphosphate contacts are provided by residues Gly-81, 84-85 (GD), Ser-89, 91-94 (NCST), 109-117 (KHGNRAVSS), and Ser-121. Anthranilate is bound at residue Gly-81. Ser-93 serves as a coordination point for Mg(2+). Residue Asn-112 participates in anthranilate binding. Arg-167 serves as a coordination point for anthranilate. Residues Asp-226 and Glu-227 each coordinate Mg(2+).

Belongs to the anthranilate phosphoribosyltransferase family. Homodimer. It depends on Mg(2+) as a cofactor.

It catalyses the reaction N-(5-phospho-beta-D-ribosyl)anthranilate + diphosphate = 5-phospho-alpha-D-ribose 1-diphosphate + anthranilate. It functions in the pathway amino-acid biosynthesis; L-tryptophan biosynthesis; L-tryptophan from chorismate: step 2/5. In terms of biological role, catalyzes the transfer of the phosphoribosyl group of 5-phosphorylribose-1-pyrophosphate (PRPP) to anthranilate to yield N-(5'-phosphoribosyl)-anthranilate (PRA). The protein is Anthranilate phosphoribosyltransferase of Oleidesulfovibrio alaskensis (strain ATCC BAA-1058 / DSM 17464 / G20) (Desulfovibrio alaskensis).